The following is a 167-amino-acid chain: Endoribonuclease YbeY (167 aa).

Zn(2+) is bound by residues His125, His129, and His135.

Belongs to the endoribonuclease YbeY family. The cofactor is Zn(2+).

The protein resides in the cytoplasm. Its function is as follows. Single strand-specific metallo-endoribonuclease involved in late-stage 70S ribosome quality control and in maturation of the 3' terminus of the 16S rRNA. In Allorhizobium ampelinum (strain ATCC BAA-846 / DSM 112012 / S4) (Agrobacterium vitis (strain S4)), this protein is Endoribonuclease YbeY.